We begin with the raw amino-acid sequence, 675 residues long: G-protein coupled receptor moody (675 aa).

The Extracellular segment spans residues 1 to 44 (MSDETTGSLGDAFSPMDTPTTTIMPPPADVDESGFSHSLLTFAA). A helical transmembrane segment spans residues 45–65 (VMTFLIMIVGICGNLLTVVAL). At 66-73 (LKCPKVRN) the chain is on the cytoplasmic side. The chain crosses the membrane as a helical span at residues 74-94 (VAAAFIISLCIADLLFCALVL). Over 95 to 115 (PFQGLRFVQGTWRHGEVLCRL) the chain is Extracellular. The cysteines at positions 113 and 192 are disulfide-linked. A helical membrane pass occupies residues 116–136 (IPFIQYGNIGVSLLCIAMITI). Residues 137-156 (NRYVMITHYSLYNRIYKRHW) lie on the Cytoplasmic side of the membrane. A helical transmembrane segment spans residues 157-177 (IAIMIAACWLFSYGMQLPTLL). The Extracellular portion of the chain corresponds to 178–206 (GAWGRFGYDARLQTCSIMSDRHGHSSKTT). A helical transmembrane segment spans residues 207–227 (LFITAFVIPCLVIIACYAKIF). Over 228–327 (WVVHKSEQRL…AKRNEWRITK (100 aa)) the chain is Cytoplasmic. Residues 258–316 (TSMPSGDGANPSQVPAGCRVSSDSSSNYSTDVPDTTPGGAGGGAGVKQQPSRVKDQREV) form a disordered region. Low complexity predominate over residues 278–294 (SSDSSSNYSTDVPDTTP). A helical transmembrane segment spans residues 328-348 (MVLAIFLSFVICYLPITIVKV). The Extracellular portion of the chain corresponds to 349–359 (ADKDVEHPSLH). A helical transmembrane segment spans residues 360–380 (IFSYIMLYLSACINPIIYVIM). Residues 381–675 (NKQYRKAYKT…LMDKKKFPKD (295 aa)) are Cytoplasmic-facing. Disordered stretches follow at residues 475–568 (SKSS…GNGS) and 588–675 (LPPT…FPKD). The segment covering 536-551 (SSVISANPSSSPSPSS) has biased composition (low complexity). The span at 552 to 565 (SGGGIYRPGIGSMG) shows a compositional bias: gly residues. Basic and acidic residues predominate over residues 666–675 (LMDKKKFPKD).

Belongs to the G-protein coupled receptor 1 family.

Its subcellular location is the cell membrane. Required in glia to regulate the acute sensitivity to cocaine and to continuously maintain the proper blood-brain barrier (BBB) function. A moody-mediated signaling pathway functions in glia to regulate nervous system insulation and drug-related behaviors. The polypeptide is G-protein coupled receptor moody (Drosophila pseudoobscura pseudoobscura (Fruit fly)).